Reading from the N-terminus, the 473-residue chain is 3-isopropylmalate dehydratase large subunit (473 aa).

Residues Cys354, Cys414, and Cys417 each contribute to the [4Fe-4S] cluster site.

Belongs to the aconitase/IPM isomerase family. LeuC type 1 subfamily. In terms of assembly, heterodimer of LeuC and LeuD. It depends on [4Fe-4S] cluster as a cofactor.

The enzyme catalyses (2R,3S)-3-isopropylmalate = (2S)-2-isopropylmalate. It functions in the pathway amino-acid biosynthesis; L-leucine biosynthesis; L-leucine from 3-methyl-2-oxobutanoate: step 2/4. In terms of biological role, catalyzes the isomerization between 2-isopropylmalate and 3-isopropylmalate, via the formation of 2-isopropylmaleate. This chain is 3-isopropylmalate dehydratase large subunit, found in Mycobacterium bovis (strain ATCC BAA-935 / AF2122/97).